An 87-amino-acid polypeptide reads, in one-letter code: Putative regulatory protein BCQ_3657 (87 aa).

Belongs to the RemA family.

In Bacillus cereus (strain Q1), this protein is Putative regulatory protein BCQ_3657.